A 545-amino-acid polypeptide reads, in one-letter code: MTTNYIFVTGGVVSSLGKGIAAASLAAILEARGLNVTIMKLDPYINVDPGTMSPIQHGEVFVTEDGAETDLDLGHYERFIRTKMSRRNNFTTGRIYSDVLRKERRGDYLGATVQVIPHITNAIKERIIEGGEGHDVVLVEIGGTVGDIESLPFLEAIRQLAVDIGREHALFMHLTLVPYMAAAGEVKTKPTQHSVKELLSIGIQPDILICRSDRAVPANERAKIALFCNVAEKAVISLKDVDSIYKIPGMLKSQGLDDYICKRFSLDCPEANLAEWEQVIYEEANPAGEVTIGMVGKYIELPDAYKSVIEALKHGGLKNRVTVNIKLIDSQDVETRGVEILKDLDAILIPGGFGYRGVEGKVATARYARENNIPYLGICLGMQVALIEFARNVAGMENANSTEFVPDCKYPVVALITEWRDENGNVEVRTEKSDLGGTMRLGAQMCQLSDESLVRQMYGTPTITERHRHRYEVNNMLLNQIEAAGLRIAGRSGDDQLVEIIEVPNHPWFVACQFHPEFTSTPRDGHPLFAGFVKAASEYQKRQAK.

The interval 1–266 is amidoligase domain; it reads MTTNYIFVTG…DDYICKRFSL (266 aa). Residue Ser-14 coordinates CTP. Ser-14 is a binding site for UTP. ATP contacts are provided by residues 15 to 20 and Asp-72; that span reads SLGKGI. Residues Asp-72 and Glu-140 each contribute to the Mg(2+) site. CTP is bound by residues 147–149, 187–192, and Lys-223; these read DIE and KTKPTQ. UTP-binding positions include 187–192 and Lys-223; that span reads KTKPTQ. 239-241 lines the ATP pocket; that stretch reads KDV. The Glutamine amidotransferase type-1 domain occupies 291–542; that stretch reads TIGMVGKYIE…VKAASEYQKR (252 aa). Gly-352 lines the L-glutamine pocket. The active-site Nucleophile; for glutamine hydrolysis is Cys-379. Residues 380 to 383, Glu-403, and Arg-470 each bind L-glutamine; that span reads LGMQ. Catalysis depends on residues His-515 and Glu-517.

The protein belongs to the CTP synthase family. In terms of assembly, homotetramer.

The enzyme catalyses UTP + L-glutamine + ATP + H2O = CTP + L-glutamate + ADP + phosphate + 2 H(+). It carries out the reaction L-glutamine + H2O = L-glutamate + NH4(+). The catalysed reaction is UTP + NH4(+) + ATP = CTP + ADP + phosphate + 2 H(+). The protein operates within pyrimidine metabolism; CTP biosynthesis via de novo pathway; CTP from UDP: step 2/2. Allosterically activated by GTP, when glutamine is the substrate; GTP has no effect on the reaction when ammonia is the substrate. The allosteric effector GTP functions by stabilizing the protein conformation that binds the tetrahedral intermediate(s) formed during glutamine hydrolysis. Inhibited by the product CTP, via allosteric rather than competitive inhibition. Functionally, catalyzes the ATP-dependent amination of UTP to CTP with either L-glutamine or ammonia as the source of nitrogen. Regulates intracellular CTP levels through interactions with the four ribonucleotide triphosphates. This is CTP synthase from Citrobacter koseri (strain ATCC BAA-895 / CDC 4225-83 / SGSC4696).